A 135-amino-acid chain; its full sequence is Cystatin-1 (135 aa).

The signal sequence occupies residues 1–24; it reads MRKHRIVSLVAALLVLLALAAVSS. Positions 86–90 match the Secondary area of contact motif; sequence QVVAG.

It belongs to the cystatin family. Phytocystatin subfamily.

The polypeptide is Cystatin-1 (RAMDAZC7) (Zea mays (Maize)).